The chain runs to 296 residues: MLKVLEGPSLAERTTLRLGGRALAEVRVTSRDALDDLPGVLQCLGGSPLMLGCGSNILAADGELPVVVVSLDMDDAPTIVGETAEGVVVRVGAATRLPRLLGQLASWGLAGLEGLAGIPGSVGGAVAMNAGSYGCEFGTVLRSVEVFSPDFGLADVPHENIEYAYRHFGLKGCHGWFVVTGADIVLRRGESAAITAAMRANYLKKKSTQPVLARSAGCVFRNPAPGVSAGRLIDQAGLRGKRIGGMAFSEVHANFLVNEGAGRSDEAFELLQLAQEIVKRRHGMDLTLEVKILSWL.

An FAD-binding PCMH-type domain is found at 18 to 189 (LGGRALAEVR…TGADIVLRRG (172 aa)). R166 is an active-site residue. C218 serves as the catalytic Proton donor. The active site involves E289.

It belongs to the MurB family. FAD is required as a cofactor.

The protein resides in the cytoplasm. It carries out the reaction UDP-N-acetyl-alpha-D-muramate + NADP(+) = UDP-N-acetyl-3-O-(1-carboxyvinyl)-alpha-D-glucosamine + NADPH + H(+). It participates in cell wall biogenesis; peptidoglycan biosynthesis. Functionally, cell wall formation. The sequence is that of UDP-N-acetylenolpyruvoylglucosamine reductase from Nitratidesulfovibrio vulgaris (strain ATCC 29579 / DSM 644 / CCUG 34227 / NCIMB 8303 / VKM B-1760 / Hildenborough) (Desulfovibrio vulgaris).